A 598-amino-acid polypeptide reads, in one-letter code: Elongation factor 4 (598 aa).

A tr-type G domain is found at 2 to 184 (KNIRNFSIIA…EIVAKIPAPE (183 aa)). GTP is bound by residues 14-19 (DHGKST) and 131-134 (NKID).

The protein belongs to the TRAFAC class translation factor GTPase superfamily. Classic translation factor GTPase family. LepA subfamily.

The protein localises to the cell inner membrane. It carries out the reaction GTP + H2O = GDP + phosphate + H(+). Functionally, required for accurate and efficient protein synthesis under certain stress conditions. May act as a fidelity factor of the translation reaction, by catalyzing a one-codon backward translocation of tRNAs on improperly translocated ribosomes. Back-translocation proceeds from a post-translocation (POST) complex to a pre-translocation (PRE) complex, thus giving elongation factor G a second chance to translocate the tRNAs correctly. Binds to ribosomes in a GTP-dependent manner. This Haemophilus influenzae (strain ATCC 51907 / DSM 11121 / KW20 / Rd) protein is Elongation factor 4.